Here is a 505-residue protein sequence, read N- to C-terminus: Trans-cinnamate 4-monooxygenase (505 aa).

A helical membrane pass occupies residues 3–23 (LLLIEKTLVALFAAIIGAILI). Residues 213-218 (RSRLAQ) and A306 each bind (E)-cinnamate. Residue C447 coordinates heme.

Belongs to the cytochrome P450 family. It depends on heme as a cofactor.

Its subcellular location is the membrane. It catalyses the reaction (E)-cinnamate + reduced [NADPH--hemoprotein reductase] + O2 = (E)-4-coumarate + oxidized [NADPH--hemoprotein reductase] + H2O + H(+). Its pathway is phenylpropanoid metabolism; trans-4-coumarate biosynthesis; trans-4-coumarate from trans-cinnamate: step 1/1. Its activity is regulated as follows. Inactivated by piperonylic acid. Catalyzes the first oxidative step of the phenylpropanoid pathway in higher plants by transforming trans-cinnamate into p-coumarate. The compounds formed by this pathway are essential components for lignification, pollination, and defense against ultraviolet light, predators and pathogens. Can also use 2-naphthoic acid as substrate. The polypeptide is Trans-cinnamate 4-monooxygenase (Helianthus tuberosus (Jerusalem artichoke)).